The primary structure comprises 2352 residues: Ectopic P granules protein 5 (2352 aa).

Disordered regions lie at residues 1–112 and 1315–1335; these read MAEL…IFPR and KNRE…SSAK. Basic and acidic residues predominate over residues 66–81; the sequence is DSLKREEASEPLKDVR.

This sequence belongs to the EPG5 family. Expressed in pharyngeal and body wall muscles and intestine cells.

Its subcellular location is the cytoplasm. The protein resides in the cytoplasmic vesicle. The protein localises to the phagosome membrane. Involved in the maturation of autophagosomes into autolysosomes during starvation-induced autotrophy. Specifically, involved in the clearance of apoptotic cells by promoting the delivery of engulfed apoptotic cells to the lysosome. The protein is Ectopic P granules protein 5 of Caenorhabditis elegans.